The following is a 62-amino-acid chain: MKSCLINVSLLILLLLPILGYASVNAESIDGENDFEEERGFGCFRSCWKAGHDDKTCKSMCG.

A signal peptide spans 1-26; sequence MKSCLINVSLLILLLLPILGYASVNA. Residues 27–38 constitute a propeptide that is removed on maturation; that stretch reads ESIDGENDFEEE. 2 disulfide bridges follow: C43–C61 and C47–C57.

The protein belongs to the short scorpion toxin superfamily. Potassium channel inhibitor kappa-KTx family. Kappa-KTx 1 subfamily. In terms of tissue distribution, expressed by the venom gland.

It localises to the secreted. Shows structural homology with WaTx suggesting that it acts as a cell-penetrating peptide (CPP) with defensive purpose that induces pain by specifically activating mammalian sensory neuron TRPA1 channels. Has no effect on the voltage-gated potassium channels tested. The sequence is that of Potassium channel toxin kappa-KTx 1.4 from Heterometrus petersii (Asian forest scorpion).